Here is a 169-residue protein sequence, read N- to C-terminus: PTS system glucose-specific EIIA component (169 aa).

Residues 39-143 (DVVFAEKIVG…STLTPVVISN (105 aa)) form the PTS EIIA type-1 domain. Zn(2+)-binding residues include H76 and H91. H91 (tele-phosphohistidine intermediate; for EIIA activity) is an active-site residue. Phosphohistidine; by HPr is present on H91.

In terms of assembly, heterodimer with glycerol kinase (glpk). Zn(2+) serves as cofactor.

The protein localises to the cytoplasm. Its function is as follows. The phosphoenolpyruvate-dependent sugar phosphotransferase system (sugar PTS), a major carbohydrate active transport system, catalyzes the phosphorylation of incoming sugar substrates concomitantly with their translocation across the cell membrane. The enzyme II complex composed of PtsG and Crr is involved in glucose transport. The protein is PTS system glucose-specific EIIA component (crr) of Salmonella typhi.